A 158-amino-acid chain; its full sequence is Flagellar assembly factor FliW (158 aa).

It belongs to the FliW family. In terms of assembly, interacts with translational regulator CsrA and flagellin(s).

The protein localises to the cytoplasm. In terms of biological role, acts as an anti-CsrA protein, binds CsrA and prevents it from repressing translation of its target genes, one of which is flagellin. Binds to flagellin and participates in the assembly of the flagellum. The protein is Flagellar assembly factor FliW of Moorella thermoacetica (strain ATCC 39073 / JCM 9320).